Consider the following 393-residue polypeptide: tRNA-specific 2-thiouridylase MnmA (393 aa).

Residues 19-26 (AMSGGVDS) and L45 each bind ATP. C113 functions as the Nucleophile in the catalytic mechanism. Residues C113 and C210 are joined by a disulfide bond. G137 serves as a coordination point for ATP. An interaction with tRNA region spans residues 160 to 162 (RDQ). The Cysteine persulfide intermediate role is filled by C210.

Belongs to the MnmA/TRMU family.

The protein resides in the cytoplasm. The enzyme catalyses S-sulfanyl-L-cysteinyl-[protein] + uridine(34) in tRNA + AH2 + ATP = 2-thiouridine(34) in tRNA + L-cysteinyl-[protein] + A + AMP + diphosphate + H(+). In terms of biological role, catalyzes the 2-thiolation of uridine at the wobble position (U34) of tRNA, leading to the formation of s(2)U34. The sequence is that of tRNA-specific 2-thiouridylase MnmA from Bradyrhizobium diazoefficiens (strain JCM 10833 / BCRC 13528 / IAM 13628 / NBRC 14792 / USDA 110).